Reading from the N-terminus, the 636-residue chain is DNA ligase (636 aa).

K113 serves as the catalytic N6-AMP-lysine intermediate. Residues 560-636 (NSEGIFQNQT…KSSFSKKFEK (77 aa)) form the BRCT domain.

This sequence belongs to the NAD-dependent DNA ligase family.

The enzyme catalyses NAD(+) + (deoxyribonucleotide)n-3'-hydroxyl + 5'-phospho-(deoxyribonucleotide)m = (deoxyribonucleotide)n+m + AMP + beta-nicotinamide D-nucleotide.. In terms of biological role, catalyzes the formation of phosphodiester linkages between 5'-phosphoryl and 3'-hydroxyl groups in double-stranded DNA using NAD as a coenzyme and as the energy source for the reaction. This chain is DNA ligase, found in Acanthamoeba polyphaga (Amoeba).